A 150-amino-acid polypeptide reads, in one-letter code: Ubiquitin-conjugating enzyme E2 3 (150 aa).

One can recognise a UBC core domain in the interval 4–150 (PAKKRLMWDF…VIEIVEQSYV (147 aa)). The active-site Glycyl thioester intermediate is the Cys88.

Belongs to the ubiquitin-conjugating enzyme family. In terms of tissue distribution, expressed in all tissues examined. Lower levels found in leaves.

The catalysed reaction is S-ubiquitinyl-[E1 ubiquitin-activating enzyme]-L-cysteine + [E2 ubiquitin-conjugating enzyme]-L-cysteine = [E1 ubiquitin-activating enzyme]-L-cysteine + S-ubiquitinyl-[E2 ubiquitin-conjugating enzyme]-L-cysteine.. It participates in protein modification; protein ubiquitination. In terms of biological role, accepts the ubiquitin from the E1 complex and catalyzes its covalent attachment to other proteins. In Arabidopsis thaliana (Mouse-ear cress), this protein is Ubiquitin-conjugating enzyme E2 3 (UBC3).